We begin with the raw amino-acid sequence, 193 residues long: Large ribosomal subunit protein uL11 (193 aa).

Belongs to the universal ribosomal protein uL11 family. Part of the ribosomal stalk of the 50S ribosomal subunit. Interacts with L10 and the large rRNA to form the base of the stalk. L10 forms an elongated spine to which L12 dimers bind in a sequential fashion forming a multimeric L10(L12)X complex. In terms of processing, one or more lysine residues are methylated.

Forms part of the ribosomal stalk which helps the ribosome interact with GTP-bound translation factors. This Mycoplasmopsis synoviae (strain 53) (Mycoplasma synoviae) protein is Large ribosomal subunit protein uL11.